Here is an 897-residue protein sequence, read N- to C-terminus: Interference hedgehog (897 aa).

A signal peptide spans 1–26 (MSVTRGHKSTPSLLLLFLSVLTSLLA). Residues 27-702 (AIPVLQANAP…THNETFNMNP (676 aa)) lie on the Extracellular side of the membrane. Ig-like C2-type domains follow at residues 40 to 147 (PGVR…ATIS), 148 to 235 (GDKI…RRLE), 244 to 336 (PSAA…YIQL), and 342 to 429 (PRIV…LQVN). Disulfide bonds link Cys-63/Cys-125, Cys-169/Cys-217, and Cys-272/Cys-320. Residues Asn-96 and Asn-99 are each glycosylated (N-linked (GlcNAc...) asparagine). 4 N-linked (GlcNAc...) asparagine glycosylation sites follow: Asn-296, Asn-351, Asn-393, and Asn-467. A disulfide bond links Cys-363 and Cys-411. Residues 434 to 468 (QAGDGMGTGGMGRSSNRNAHNRKQKQMVPPSAPNV) are disordered. Fibronectin type-III domains follow at residues 462-571 (PPSA…LQRG) and 579-674 (VPEL…TQRP). Heparin-binding residues include Arg-498, Lys-504, and Lys-506. An N-linked (GlcNAc...) asparagine glycan is attached at Asn-530. Residue Arg-545 coordinates heparin. The N-linked (GlcNAc...) asparagine glycan is linked to Asn-561. Polar residues predominate over residues 666-682 (LKQGRTQRPRSSTTAQP). The segment at 666–694 (LKQGRTQRPRSSTTAQPTMHTVDTTTPTH) is disordered. Over residues 683–694 (TMHTVDTTTPTH) the composition is skewed to low complexity. N-linked (GlcNAc...) asparagine glycosylation is present at Asn-695. A helical transmembrane segment spans residues 703-723 (LLTGTISGGALLILLVISACL). The Cytoplasmic portion of the chain corresponds to 724 to 897 (CLCKRRHSRG…SSGSLNSVGV (174 aa)). Disordered regions lie at residues 773–793 (AQQQQQQLQQQHQQDEKDSQD) and 819–849 (MSSSSLRRSQRTLERAAAGGGSGGNNNNLNQ). Residues 774–784 (QQQQQQLQQQH) are compositionally biased toward low complexity.

It belongs to the immunoglobulin superfamily. IHOG family. Homodimer. Heterotetramer; 2 iHog chains bind 2 hh chains when facilitated by heparin, heparin is required to promote high-affinity interactions between hh and iHog.

The protein resides in the membrane. Mediates response to the active Hedgehog (Hh) protein signal in embryos, functioning upstream or at the level of patched (ptc). In Drosophila mojavensis (Fruit fly), this protein is Interference hedgehog.